The primary structure comprises 311 residues: tRNA-cytidine(32) 2-sulfurtransferase (311 aa).

Positions Ser-47–Ser-52 match the PP-loop motif motif. Cys-122, Cys-125, and Cys-213 together coordinate [4Fe-4S] cluster.

It belongs to the TtcA family. Homodimer. Mg(2+) is required as a cofactor. Requires [4Fe-4S] cluster as cofactor.

Its subcellular location is the cytoplasm. The enzyme catalyses cytidine(32) in tRNA + S-sulfanyl-L-cysteinyl-[cysteine desulfurase] + AH2 + ATP = 2-thiocytidine(32) in tRNA + L-cysteinyl-[cysteine desulfurase] + A + AMP + diphosphate + H(+). Its pathway is tRNA modification. Its function is as follows. Catalyzes the ATP-dependent 2-thiolation of cytidine in position 32 of tRNA, to form 2-thiocytidine (s(2)C32). The sulfur atoms are provided by the cysteine/cysteine desulfurase (IscS) system. The polypeptide is tRNA-cytidine(32) 2-sulfurtransferase (Escherichia coli O7:K1 (strain IAI39 / ExPEC)).